Here is a 241-residue protein sequence, read N- to C-terminus: MQINISNLDVKNHLDKFIEDRLEYEFCKQDKYLYLENDNLKLHYNNKELFIDFNDSEILNRINPKTKKCSVVQAIEGRSKAKLTILDTTAGLGRDTFTLAARGHTLLTLEKDSYLYLLLKDALQRAQQINYLKEIANRITLINIDSNEYILTTDKSFDCVYVDPMFPPRKKSAKVKQGMQILHQVGFNDEVSNSNLLDNIIQTQISPKAVVKRPINAEFLSNKKPSSQLKGKTNRFDIYSL.

S-adenosyl-L-methionine-binding positions include 94-95 (RD) and aspartate 163.

It belongs to the methyltransferase superfamily. RsmJ family.

It is found in the cytoplasm. The catalysed reaction is guanosine(1516) in 16S rRNA + S-adenosyl-L-methionine = N(2)-methylguanosine(1516) in 16S rRNA + S-adenosyl-L-homocysteine + H(+). Specifically methylates the guanosine in position 1516 of 16S rRNA. This Francisella tularensis subsp. tularensis (strain FSC 198) protein is Ribosomal RNA small subunit methyltransferase J.